We begin with the raw amino-acid sequence, 115 residues long: Large ribosomal subunit protein bL19 (115 aa).

The protein belongs to the bacterial ribosomal protein bL19 family.

Its function is as follows. This protein is located at the 30S-50S ribosomal subunit interface and may play a role in the structure and function of the aminoacyl-tRNA binding site. This chain is Large ribosomal subunit protein bL19, found in Streptococcus sanguinis (strain SK36).